A 205-amino-acid polypeptide reads, in one-letter code: MNLHGLELPGRDQRLSPEVIDLTEDIEDDGADVSEVTLLDLTRIPEFQPRRRIRTSRNHLDANLSNVPTINSIPSPVTRPPVAVGGGIFYGARRTRNRSQTQRRTLLENGFRNSRKKAQDSSNSIAERVSPPPGFCYDVHPHNNIACAKCGNELVSDEKKSIFAAKCGHLFCSTCAKELRKKTVPCPVQHCRKRITKKFIFPLYL.

An RING-type; degenerate zinc finger spans residues 147 to 190 (CAKCGNELVSDEKKSIFAAKCGHLFCSTCAKELRKKTVPCPVQH).

In terms of assembly, part of an E3 ubiquitin complex including rfp1, rfp2 and slx8. Interacts with slx8.

The protein resides in the nucleus. It carries out the reaction S-ubiquitinyl-[E2 ubiquitin-conjugating enzyme]-L-cysteine + [acceptor protein]-L-lysine = [E2 ubiquitin-conjugating enzyme]-L-cysteine + N(6)-ubiquitinyl-[acceptor protein]-L-lysine.. It functions in the pathway protein modification; protein ubiquitination. Its function is as follows. Mediates ubiquitination and subsequent desumoylation/degradation of sumoylated proteins and proteins containing SUMO-like domains. Involved in maintaining genome stability where it acts in the cellular response to DNA damage. The protein is E3 ubiquitin-protein ligase complex slx8-rfp subunit rfp2 (rfp2) of Schizosaccharomyces pombe (strain 972 / ATCC 24843) (Fission yeast).